The chain runs to 20 residues: ADDKNPLEECFCEDDDYCEG.

The protein belongs to the flavin monoamine oxidase family. FIG1 subfamily. As to quaternary structure, monomer. This is in contrast with most of its orthologs, that are non-covalently linked homodimers. Requires FAD as cofactor. In terms of processing, N-glycosylated. As to expression, expressed by the venom gland.

The protein resides in the secreted. The catalysed reaction is an L-alpha-amino acid + O2 + H2O = a 2-oxocarboxylate + H2O2 + NH4(+). It catalyses the reaction L-leucine + O2 + H2O = 4-methyl-2-oxopentanoate + H2O2 + NH4(+). The enzyme catalyses L-phenylalanine + O2 + H2O = 3-phenylpyruvate + H2O2 + NH4(+). It carries out the reaction L-tryptophan + O2 + H2O = indole-3-pyruvate + H2O2 + NH4(+). The catalysed reaction is L-methionine + O2 + H2O = 4-methylsulfanyl-2-oxobutanoate + H2O2 + NH4(+). It catalyses the reaction L-isoleucine + O2 + H2O = (S)-3-methyl-2-oxopentanoate + H2O2 + NH4(+). The enzyme catalyses L-tyrosine + O2 + H2O = 3-(4-hydroxyphenyl)pyruvate + H2O2 + NH4(+). Functionally, catalyzes an oxidative deamination of predominantly hydrophobic and aromatic L-amino acids, thus producing hydrogen peroxide that may contribute to the diverse toxic effects of this enzyme. Is active on L-Ile, L-Leu, L-Met, L-Phe, L-Trp, and L-Tyr. Exhibits diverse biological activities, such as hemorrhage, hemolysis, edema, apoptosis of vascular endothelial cells or tumor cell lines, antibacterial and antiparasitic activities, as well as regulation of platelet aggregation. Its effect on platelets is controversial, since it either induces aggregation or inhibits agonist-induced aggregation. These different effects are probably due to different experimental conditions. The protein is L-amino-acid oxidase L2 of Daboia russelii (Russel's viper).